The primary structure comprises 405 residues: tRNA (uracil(54)-C(5))-methyltransferase (405 aa).

The [4Fe-4S] cluster site is built by Cys61, Cys67, Cys70, and Cys137. S-adenosyl-L-methionine is bound by residues Gln252, Tyr278, Thr283, 299-300, Asp326, and Asp340; that span reads DS. Cys367 (nucleophile) is an active-site residue. Residue Glu399 is the Proton acceptor of the active site.

This sequence belongs to the class I-like SAM-binding methyltransferase superfamily. RNA M5U methyltransferase family.

The catalysed reaction is uridine(54) in tRNA + S-adenosyl-L-methionine = 5-methyluridine(54) in tRNA + S-adenosyl-L-homocysteine + H(+). Activated by magnesium ions. Its function is as follows. Catalyzes the formation of 5-methyl-uridine at position 54 (m5U54) in tRNA. This is tRNA (uracil(54)-C(5))-methyltransferase from Pyrococcus abyssi (strain GE5 / Orsay).